The primary structure comprises 702 residues: Flagellar operon control protein UmoB (702 aa).

5 helical membrane passes run 4 to 24 (SVII…FLFF), 204 to 224 (GFWN…ALMM), 227 to 247 (VFLP…LFLI), 343 to 363 (IIFV…QPLS), and 656 to 676 (GNTL…FFII).

It belongs to the IgaA family.

The protein resides in the cell inner membrane. In terms of biological role, up-regulator of flagellar flhDC master operon. The sequence is that of Flagellar operon control protein UmoB (umoB) from Proteus mirabilis.